Here is a 148-residue protein sequence, read N- to C-terminus: Large ribosomal subunit protein bL9 (148 aa).

This sequence belongs to the bacterial ribosomal protein bL9 family.

Functionally, binds to the 23S rRNA. The chain is Large ribosomal subunit protein bL9 from Parabacteroides distasonis (strain ATCC 8503 / DSM 20701 / CIP 104284 / JCM 5825 / NCTC 11152).